The primary structure comprises 378 residues: Ribosomal RNA large subunit methyltransferase G (378 aa).

Belongs to the methyltransferase superfamily. RlmG family.

The protein localises to the cytoplasm. It carries out the reaction guanosine(1835) in 23S rRNA + S-adenosyl-L-methionine = N(2)-methylguanosine(1835) in 23S rRNA + S-adenosyl-L-homocysteine + H(+). Functionally, specifically methylates the guanine in position 1835 (m2G1835) of 23S rRNA. The sequence is that of Ribosomal RNA large subunit methyltransferase G from Salmonella agona (strain SL483).